Consider the following 677-residue polypeptide: DNA-directed RNA polymerase subunit beta' (677 aa).

The Zn(2+) site is built by cysteine 69, cysteine 71, cysteine 87, and cysteine 90. Mg(2+) is bound by residues aspartate 489, aspartate 491, and aspartate 493.

Belongs to the RNA polymerase beta' chain family. RpoC1 subfamily. In plastids the minimal PEP RNA polymerase catalytic core is composed of four subunits: alpha, beta, beta', and beta''. When a (nuclear-encoded) sigma factor is associated with the core the holoenzyme is formed, which can initiate transcription. Requires Mg(2+) as cofactor. It depends on Zn(2+) as a cofactor.

It localises to the plastid. Its subcellular location is the chloroplast. The catalysed reaction is RNA(n) + a ribonucleoside 5'-triphosphate = RNA(n+1) + diphosphate. In terms of biological role, DNA-dependent RNA polymerase catalyzes the transcription of DNA into RNA using the four ribonucleoside triphosphates as substrates. In Spinacia oleracea (Spinach), this protein is DNA-directed RNA polymerase subunit beta'.